The following is a 534-amino-acid chain: Kelch repeat and BTB domain-containing protein 4 (534 aa).

Positions 61 to 128 (ADVTISVEGR…IYHGTVKLRA (68 aa)) constitute a BTB domain. Residues 163 to 255 (CLQVMWLADR…SLKEIGENVH (93 aa)) enclose the BACK domain. Kelch repeat units lie at residues 255-301 (HIYL…KHGG), 302-344 (DLYV…SVPG), 347-394 (AIYS…NLNG), 396-446 (IYLL…VHKD), and 448-497 (VFIV…VFRD).

In terms of assembly, component of the BCR(KBTBD4) E3 ubiquitin ligase complex, at least composed of CUL3, KBTBD4 and RBX1.

Functionally, substrate-specific adapter of a BCR (BTB-CUL3-RBX1) E3 ubiquitin ligase complex which targets CoREST corepressor complex components RCOR1, KDM1A/LSD1 and HDAC2 for proteasomal degradation. RCOR1 is likely to be the primary target while degradation of KDM1A and HDAC2 is likely due to their association with RCOR1. Also targets RCOR3, MIER2 and MIER3 for proteasomal degradation as well as associated proteins ZNF217 and RREB1. Degradation is dependent on the presence of an ELM2 domain in the target proteins. The protein is Kelch repeat and BTB domain-containing protein 4 (Kbtbd4) of Mus musculus (Mouse).